The following is a 333-amino-acid chain: Diaminopimelate epimerase (333 aa).

Residues Asn24 and Asn79 each contribute to the substrate site. The active-site Proton donor is Cys88. Substrate contacts are provided by residues 89-90 (GN), Asn176, Asn210, and 228-229 (ER). Catalysis depends on Cys237, which acts as the Proton acceptor. Substrate is bound at residue 238 to 239 (GT).

This sequence belongs to the diaminopimelate epimerase family. Homodimer.

The protein localises to the cytoplasm. The catalysed reaction is (2S,6S)-2,6-diaminopimelate = meso-2,6-diaminopimelate. It participates in amino-acid biosynthesis; L-lysine biosynthesis via DAP pathway; DL-2,6-diaminopimelate from LL-2,6-diaminopimelate: step 1/1. In terms of biological role, catalyzes the stereoinversion of LL-2,6-diaminopimelate (L,L-DAP) to meso-diaminopimelate (meso-DAP), a precursor of L-lysine and an essential component of the bacterial peptidoglycan. This is Diaminopimelate epimerase from Clostridium acetobutylicum (strain ATCC 824 / DSM 792 / JCM 1419 / IAM 19013 / LMG 5710 / NBRC 13948 / NRRL B-527 / VKM B-1787 / 2291 / W).